A 174-amino-acid chain; its full sequence is Transcription factor bHLH168 (174 aa).

Residues 14 to 63 enclose the bHLH domain; it reads SLREQRNLREKERRMRMKHLFSILSSHVSPTRRLPVPQLIDQAVSYMIQL.

It belongs to the bHLH protein family.

Its subcellular location is the nucleus. In Arabidopsis thaliana (Mouse-ear cress), this protein is Transcription factor bHLH168.